The sequence spans 460 residues: Phosphomethylpyrimidine synthase (460 aa).

Residues Asn80, Met109, Tyr139, His175, 195-197 (SRG), 236-239 (DSLR), and Glu275 contribute to the substrate site. Residue His279 coordinates Zn(2+). Tyr302 contributes to the substrate binding site. His343 lines the Zn(2+) pocket. 3 residues coordinate [4Fe-4S] cluster: Cys423, Cys426, and Cys431.

This sequence belongs to the ThiC family. The cofactor is [4Fe-4S] cluster.

The catalysed reaction is 5-amino-1-(5-phospho-beta-D-ribosyl)imidazole + S-adenosyl-L-methionine = 4-amino-2-methyl-5-(phosphooxymethyl)pyrimidine + CO + 5'-deoxyadenosine + formate + L-methionine + 3 H(+). It participates in cofactor biosynthesis; thiamine diphosphate biosynthesis. Functionally, catalyzes the synthesis of the hydroxymethylpyrimidine phosphate (HMP-P) moiety of thiamine from aminoimidazole ribotide (AIR) in a radical S-adenosyl-L-methionine (SAM)-dependent reaction. The chain is Phosphomethylpyrimidine synthase from Microcystis aeruginosa (strain NIES-843 / IAM M-2473).